The following is a 458-amino-acid chain: Probable Xaa-Pro aminopeptidase pepP (458 aa).

The Mn(2+) site is built by D254, D265, E388, and E428.

The protein belongs to the peptidase M24B family. Mn(2+) is required as a cofactor.

It carries out the reaction Release of any N-terminal amino acid, including proline, that is linked to proline, even from a dipeptide or tripeptide.. Its function is as follows. Catalyzes the removal of a penultimate prolyl residue from the N-termini of peptides. The chain is Probable Xaa-Pro aminopeptidase pepP (pepP) from Botryotinia fuckeliana (strain B05.10) (Noble rot fungus).